Reading from the N-terminus, the 848-residue chain is Nuclear cap-binding protein subunit 1 (848 aa).

In terms of domain architecture, MIF4G spans 8-228 (LLRIGEKGPE…DLLDRIQSLA (221 aa)). The tract at residues 767–786 (EDDKPSAMDVDSENGNPKKS) is disordered.

This sequence belongs to the NCBP1 family. As to quaternary structure, component of the nuclear cap-binding complex (CBC), a heterodimer composed of ABH1/CBP80 and CBP20 that interacts with m7GpppG-capped RNA. In terms of tissue distribution, expressed in all tissues analyzed, including roots, stems, leaves and flowers.

Its subcellular location is the nucleus. It is found in the cytoplasm. Its function is as follows. Component of the cap-binding complex (CBC), which binds cotranscriptionally to the 5'-cap of pre-mRNAs and is involved in various processes such as pre-mRNA splicing and RNA-mediated gene silencing (RNAi) by microRNAs (miRNAs). The CBC complex is involved in miRNA-mediated RNA interference and is required for primary miRNA processing. In the CBC complex, ABH1/CBP80 does not bind directly capped RNAs (m7GpppG-capped RNA) but is required to stabilize the movement of the N-terminal loop of CBP20 and lock the CBC into a high affinity cap-binding state with the cap structure. Involved in flowering regulation, possibly by regulating pre-mRNA splicing of FLC gene. Acts as a negative regulator of abscisic acid signaling in guard cells. This chain is Nuclear cap-binding protein subunit 1 (ABH1), found in Arabidopsis thaliana (Mouse-ear cress).